Reading from the N-terminus, the 63-residue chain is Large ribosomal subunit protein uL29 (63 aa).

This sequence belongs to the universal ribosomal protein uL29 family.

The chain is Large ribosomal subunit protein uL29 from Hahella chejuensis (strain KCTC 2396).